The chain runs to 481 residues: UDP-glucose 6-dehydrogenase (481 aa).

NAD(+) contacts are provided by residues 16–21, Asp41, Lys46, 94–98, 135–136, and Glu172; these read GAGYVG, VNTPT, and ST. Residues 168 to 172, 227 to 231, Arg267, and 274 to 280 contribute to the substrate site; these read EFLAE, KLVAN, and QASVGFG. Cys283 functions as the Nucleophile in the catalytic mechanism. Position 283-286 (283-286) interacts with NAD(+); the sequence is CFQK. 345-346 provides a ligand contact to substrate; it reads FK. Arg353 is a binding site for NAD(+). Arg447 contacts substrate.

The protein belongs to the UDP-glucose/GDP-mannose dehydrogenase family. Expressed in the vulva and in oocytes.

It carries out the reaction UDP-alpha-D-glucose + 2 NAD(+) + H2O = UDP-alpha-D-glucuronate + 2 NADH + 3 H(+). It functions in the pathway nucleotide-sugar biosynthesis; UDP-alpha-D-glucuronate biosynthesis; UDP-alpha-D-glucuronate from UDP-alpha-D-glucose: step 1/1. In terms of biological role, involved in the biosynthesis of glycosaminoglycans; hyaluronan, chondroitin sulfate, and heparan sulfate. The polypeptide is UDP-glucose 6-dehydrogenase (sqv-4) (Caenorhabditis elegans).